The primary structure comprises 254 residues: Major prion protein (254 aa).

The first 22 residues, Met1–Cys22, serve as a signal peptide directing secretion. The tract at residues Lys23 to Ser231 is interaction with GRB2, ERI3 and SYN1. Residues Arg25 to Ser108 are disordered. Repeat copies occupy residues Pro51–Gln59, Pro60–Gln67, Pro68–Gln75, Pro76–Gln83, and Pro84–Gln91. The segment at Pro51 to Gln91 is 5 X 8 AA tandem repeats of P-H-G-G-G-W-G-Q. Over residues Gln52–Thr95 the composition is skewed to gly residues. Cu(2+) is bound by residues His61, Gly62, Gly63, His69, Gly70, Gly71, His77, Gly78, Gly79, His85, Gly86, and Gly87. Residues Gly90 to Ser231 form a prP27-30 (protease resistant core) region. The cysteines at positions 179 and 214 are disulfide-linked. N-linked (GlcNAc...) asparagine glycans are attached at residues Asn181 and Asn197. Ser231 carries the GPI-anchor amidated serine lipid modification. A propeptide spans Ser232–Gly254 (removed in mature form).

This sequence belongs to the prion family. Monomer and homodimer. Has a tendency to aggregate into amyloid fibrils containing a cross-beta spine, formed by a steric zipper of superposed beta-strands. Soluble oligomers may represent an intermediate stage on the path to fibril formation. Copper binding may promote oligomerization. Interacts with GRB2, APP, ERI3/PRNPIP and SYN1. Mislocalized cytosolically exposed PrP interacts with MGRN1; this interaction alters MGRN1 subcellular location and causes lysosomal enlargement. Interacts with KIAA1191.

Its subcellular location is the cell membrane. The protein localises to the golgi apparatus. Functionally, its primary physiological function is unclear. Has cytoprotective activity against internal or environmental stresses. May play a role in neuronal development and synaptic plasticity. May be required for neuronal myelin sheath maintenance. May play a role in iron uptake and iron homeostasis. Soluble oligomers are toxic to cultured neuroblastoma cells and induce apoptosis (in vitro). Association with GPC1 (via its heparan sulfate chains) targets PRNP to lipid rafts. Also provides Cu(2+) or Zn(2+) for the ascorbate-mediated GPC1 deaminase degradation of its heparan sulfate side chains. This is Major prion protein (PRNP) from Nothocricetulus migratorius (Gray dwarf hamster).